The following is a 163-amino-acid chain: Crossover junction endodeoxyribonuclease RuvC (163 aa).

Catalysis depends on residues Asp9, Glu76, and Asp148. Mg(2+) contacts are provided by Asp9, Glu76, and Asp148.

Belongs to the RuvC family. Homodimer which binds Holliday junction (HJ) DNA. The HJ becomes 2-fold symmetrical on binding to RuvC with unstacked arms; it has a different conformation from HJ DNA in complex with RuvA. In the full resolvosome a probable DNA-RuvA(4)-RuvB(12)-RuvC(2) complex forms which resolves the HJ. Requires Mg(2+) as cofactor.

Its subcellular location is the cytoplasm. It carries out the reaction Endonucleolytic cleavage at a junction such as a reciprocal single-stranded crossover between two homologous DNA duplexes (Holliday junction).. Functionally, the RuvA-RuvB-RuvC complex processes Holliday junction (HJ) DNA during genetic recombination and DNA repair. Endonuclease that resolves HJ intermediates. Cleaves cruciform DNA by making single-stranded nicks across the HJ at symmetrical positions within the homologous arms, yielding a 5'-phosphate and a 3'-hydroxyl group; requires a central core of homology in the junction. The consensus cleavage sequence is 5'-(A/T)TT(C/G)-3'. Cleavage occurs on the 3'-side of the TT dinucleotide at the point of strand exchange. HJ branch migration catalyzed by RuvA-RuvB allows RuvC to scan DNA until it finds its consensus sequence, where it cleaves and resolves the cruciform DNA. This Trichodesmium erythraeum (strain IMS101) protein is Crossover junction endodeoxyribonuclease RuvC.